Here is a 384-residue protein sequence, read N- to C-terminus: MDDNPTAVKLDQGGNQAPQGQGRRRLPKALGYITGDMKEFANWLKDKPQALQFVDWVLRGISQVVFVSNPISGILILVGLLVQNPWCALNGCVGTVVSTLTALLLNQDRSAITAGLQGYNATLVGILMAIYSDKGNYFWWLLFPVSAMSMTCPIFSSALNSVLSKWDLPVFTLPFNMALSMYLSATGHFNPFFPSTLVTPVTSVPNVTWPDLSALQLLKSLPVGVGQIYGCDNPWAGGIFLGAILLSSPLMCLHAAIGSLLGIIAGLSLSAPFENIYAGLWGFNSSLACIAIGGMFMALTWQTHLLALACALFTAYLGASMSHVMAVVGLPSCTWPFCLATLLFLLLTTKNPNIYKMPISKVTYPEENRIFYLQSTKRTVQGPL.

A disordered region spans residues 1–23; it reads MDDNPTAVKLDQGGNQAPQGQGR. The next 5 helical transmembrane spans lie at 61–81, 85–105, 111–131, 138–158, and 169–189; these read ISQVVFVSNPISGILILVGLL, PWCALNGCVGTVVSTLTALLL, AITAGLQGYNATLVGILMAIY, FWWLLFPVSAMSMTCPIFSSA, and PVFTLPFNMALSMYLSATGHF. Residue Asn206 is glycosylated (N-linked (GlcNAc...) asparagine). 3 consecutive transmembrane segments (helical) span residues 237 to 257, 279 to 299, and 327 to 347; these read GGIFLGAILLSSPLMCLHAAI, GLWGFNSSLACIAIGGMFMAL, and VVGLPSCTWPFCLATLLFLLL.

Belongs to the urea transporter family. Homotrimer; each subunit contains a pore through which urea permeates. Identified in a complex with STOM.

It is found in the cell membrane. The protein localises to the basolateral cell membrane. The catalysed reaction is urea(in) = urea(out). In terms of biological role, mediates the transport of urea driven by a concentration gradient across the cell membranes of erythrocytes and the renal inner medullary collecting duct which is critical to the urinary concentrating mechanism. Facilitates water transport in erythrocytes. This is Urea transporter 1 (SLC14A1) from Ovis aries (Sheep).